The primary structure comprises 338 residues: MLLSKNSQLILRHRKKFKTKKVFFSGNIQDDFPLSLSTMRTKINFHKYNDCIDFKKKIMNNNIVHNNLLISQEMIQNCDVIIYYWPKDKSEAKFQLMNIISCSPINTEIFIVGNNSSGVKSAPLMLKKWIELEKIDSAKHSILISGLIKKKAIFVLEDFFKTHLWKNLIIKSLPGVFGHKKIDSGSKLLASTFSNRITGKVLDIGCGTGFLSASLLYFSPDAILTLVDNNMYALKCSQYTLNSNKFNGKIVYSNLYSNVFKKFDLIISNPPFHNDLQINFNIIEKMICGAKKYLTKTGELRFVTSRFINCHFLLNKFFQKYYVIKETSQYKVYQAFYK.

It belongs to the methyltransferase superfamily. RsmC family. In terms of assembly, monomer.

It is found in the cytoplasm. The catalysed reaction is guanosine(1207) in 16S rRNA + S-adenosyl-L-methionine = N(2)-methylguanosine(1207) in 16S rRNA + S-adenosyl-L-homocysteine + H(+). Functionally, specifically methylates the guanine in position 1207 of 16S rRNA in the 30S particle. In Buchnera aphidicola subsp. Acyrthosiphon pisum (strain APS) (Acyrthosiphon pisum symbiotic bacterium), this protein is Ribosomal RNA small subunit methyltransferase C.